A 608-amino-acid chain; its full sequence is MKWLKQLQSLHTKLVIVYVLLIIIGMQIIGLYFTNNLEKELLDNFKKNITQYAKQLEISIEKVYDEKGSVNAQKDIQNLLSEYANRQEIGEIRFIDKDQIIIATTKQSNRSLINQKANDSSVQKALSLGQSNDHLILKDYGGGKDRVWVYNIPVKVDKKVIGNIYIESKINDVYNQLNNINQIFIVGTAISLLITVILGFFIARTITKPITDMRNQTVEMSRGNYTQRVKIYGNDEIGELALAFNNLSKRVQEAQANTESEKRRLDSVITHMSDGIIATDRRGRIRIVNDMALKMFGMAKEDIIGYYMLSVLSLEDEFKLEEIQENNDSFLLDLNEEEGLIARVNFSTIVQETGFVTGYIAVLHDVTEQQQVERERREFVANVSHELRTPLTSMNSYIEALEEGAWKDEELAPQFLSVTREETERMIRLVNDLLQLSKMDNESDQINKEIIDFNMFINKIINRHEMSAKDTTFIRDIPKKTIFTEFDPDKMTQVFDNVITNAMKYSRGDKRVEFHVKQNPLYNRMTIRIKDNGIGIPINKVDKIFDRFYRVDKARTRKMGGTGLGLAISKEIVEAHNGRIWANSVEGQGTSIFITLPCEVIEDGDWDE.

Helical transmembrane passes span 14–34 (LVIV…LYFT) and 183–203 (IFIV…FFIA). In terms of domain architecture, HAMP spans 204-256 (RTITKPITDMRNQTVEMSRGNYTQRVKIYGNDEIGELALAFNNLSKRVQEAQA). Residues 261 to 331 (EKRRLDSVIT…EIQENNDSFL (71 aa)) form the PAS domain. Residues H271, D274, H364, and E368 each coordinate Zn(2+). Positions 314 to 378 (LEDEFKLEEI…QQQVERERRE (65 aa)) constitute a PAC domain. The 219-residue stretch at 382–600 (NVSHELRTPL…SIFITLPCEV (219 aa)) folds into the Histidine kinase domain. The residue at position 385 (H385) is a Phosphohistidine; by autocatalysis.

As to quaternary structure, forms homodimers. Forms homooligomers. Post-translationally, autophosphorylated.

It localises to the cell membrane. The catalysed reaction is ATP + protein L-histidine = ADP + protein N-phospho-L-histidine.. By zinc. Zinc-binding negatively regulates WalK kinase activity and thus autophosphorylation. Member of the two-component regulatory system WalK/WalR that regulates genes involved in cell wall metabolism, virulence regulation, biofilm production, oxidative stress resistance and antibiotic resistance via direct or indirect regulation of autolysins. Functions as a sensor protein kinase which is autophosphorylated at a histidine residue in the dimerization domain and transfers its phosphate group to the conserved aspartic acid residue in the regulatory domain of WalR. In turn, WalR binds to the upstream promoter regions of the target genes to positively and negatively regulate their expression. This is Sensor protein kinase WalK (walK) from Staphylococcus aureus (strain Newman).